We begin with the raw amino-acid sequence, 534 residues long: CTP synthase (534 aa).

The interval 1-266 (MKTKFLFITG…DERIIDYLNI (266 aa)) is amidoligase domain. Ser14 contributes to the CTP binding site. Position 14 (Ser14) interacts with UTP. Residues 15–20 (SLGKGL) and Asp72 each bind ATP. Mg(2+) contacts are provided by Asp72 and Glu140. CTP-binding positions include 147 to 149 (DIE), 187 to 192 (KTKPTQ), and Lys223. Residues 187-192 (KTKPTQ) and Lys223 each bind UTP. Residue 239–241 (RDV) participates in ATP binding. The 243-residue stretch at 291–533 (TIAIVGKYVE…VGASLKHHGE (243 aa)) folds into the Glutamine amidotransferase type-1 domain. Gly353 serves as a coordination point for L-glutamine. The active-site Nucleophile; for glutamine hydrolysis is the Cys380. Residues 381–384 (LGMQ), Glu404, and Arg461 each bind L-glutamine. Catalysis depends on residues His506 and Glu508.

The protein belongs to the CTP synthase family. Homotetramer.

The catalysed reaction is UTP + L-glutamine + ATP + H2O = CTP + L-glutamate + ADP + phosphate + 2 H(+). The enzyme catalyses L-glutamine + H2O = L-glutamate + NH4(+). It carries out the reaction UTP + NH4(+) + ATP = CTP + ADP + phosphate + 2 H(+). It participates in pyrimidine metabolism; CTP biosynthesis via de novo pathway; CTP from UDP: step 2/2. Allosterically activated by GTP, when glutamine is the substrate; GTP has no effect on the reaction when ammonia is the substrate. The allosteric effector GTP functions by stabilizing the protein conformation that binds the tetrahedral intermediate(s) formed during glutamine hydrolysis. Inhibited by the product CTP, via allosteric rather than competitive inhibition. Its function is as follows. Catalyzes the ATP-dependent amination of UTP to CTP with either L-glutamine or ammonia as the source of nitrogen. Regulates intracellular CTP levels through interactions with the four ribonucleotide triphosphates. This Syntrophotalea carbinolica (strain DSM 2380 / NBRC 103641 / GraBd1) (Pelobacter carbinolicus) protein is CTP synthase.